The chain runs to 359 residues: Cyclic AMP response element-binding protein B (359 aa).

Disordered stretches follow at residues 1–73 and 185–238; these read MDNS…AQGG and VRNK…FTEI. Residues 9–32 are compositionally biased toward low complexity; the sequence is NGNSSAASGSNDVVDVVAQQAAAA. Positions 33-47 are enriched in gly residues; that stretch reads VGGGGGGGGGGGGGN. A compositionally biased stretch (low complexity) spans 48-70; it reads PQQQQQNPQSTTAGGPTGATNNA. The KID domain maps to 198 to 257; the sequence is KPEPNTQHPEDSDESLSDDDSQHHRSELTRRPSYNKIFTEISGPDMSGASLPMSDGVLNS. A phosphoserine mark is found at S209, S212, and S214. Residues 217-227 are compositionally biased toward basic and acidic residues; it reads DSQHHRSELTR. One can recognise a bZIP domain in the interval 300 to 359; sequence TRKREIRLQKNREAARECRRKKKEYIKCLENRVAVLENQNKALIEELKSLKELYCQTKND. Residues 301–326 form a basic motif region; the sequence is RKREIRLQKNREAARECRRKKKEYIK. The tract at residues 328–349 is leucine-zipper; it reads LENRVAVLENQNKALIEELKSL.

Belongs to the bZIP family. ATF subfamily. Homodimer. In terms of tissue distribution, most cells of the adult brain; cell bodies, but not neuropil.

It is found in the nucleus. Functionally, isoform E is a PKA-dependent transcriptional activator. Isoform J is a direct antagonist of activation by isoform E in cell culture. Binds the cAMP response element (CRE) (consensus: 5'-GTGACGT[AC][AG]-3'), a sequence present in many viral and cellular promoters. Has a role in long-term memory. This Drosophila melanogaster (Fruit fly) protein is Cyclic AMP response element-binding protein B.